We begin with the raw amino-acid sequence, 310 residues long: tRNA methyltransferase 10 homolog B (310 aa).

The stretch at 55-94 (RKQRNWERRLEVKKSKRKEEKLRKKLNRQDKDVSDAQLSK) forms a coiled coil. Positions 101 to 298 (TKERLEGARA…AGIPPGKGFV (198 aa)) constitute an SAM-dependent MTase TRM10-type domain.

It belongs to the class IV-like SAM-binding methyltransferase superfamily. TRM10 family.

The catalysed reaction is guanosine(9) in tRNA + S-adenosyl-L-methionine = N(1)-methylguanosine(9) in tRNA + S-adenosyl-L-homocysteine + H(+). In terms of biological role, S-adenosyl-L-methionine-dependent guanine N(1)-methyltransferase that catalyzes the formation of N(1)-methylguanine at position 9 (m1G9) in tRNAs. Probably not able to catalyze formation of N(1)-methyladenine at position 9 (m1A9) in tRNAs. The chain is tRNA methyltransferase 10 homolog B (trmt10b) from Danio rerio (Zebrafish).